A 172-amino-acid chain; its full sequence is Large ribosomal subunit protein uL10 (172 aa).

It belongs to the universal ribosomal protein uL10 family. As to quaternary structure, part of the ribosomal stalk of the 50S ribosomal subunit. The N-terminus interacts with L11 and the large rRNA to form the base of the stalk. The C-terminus forms an elongated spine to which L12 dimers bind in a sequential fashion forming a multimeric L10(L12)X complex.

Functionally, forms part of the ribosomal stalk, playing a central role in the interaction of the ribosome with GTP-bound translation factors. The sequence is that of Large ribosomal subunit protein uL10 from Methylobacterium radiotolerans (strain ATCC 27329 / DSM 1819 / JCM 2831 / NBRC 15690 / NCIMB 10815 / 0-1).